Consider the following 177-residue polypeptide: Large ribosomal subunit protein bL9 (177 aa).

The interval 151–177 is disordered; that stretch reads EDEEIAEAAPVAEAQAEADGHSTEETA. The segment covering 157-167 has biased composition (low complexity); the sequence is EAAPVAEAQAE. Positions 168–177 are enriched in basic and acidic residues; sequence ADGHSTEETA.

It belongs to the bacterial ribosomal protein bL9 family.

Functionally, binds to the 23S rRNA. The chain is Large ribosomal subunit protein bL9 from Solidesulfovibrio magneticus (strain ATCC 700980 / DSM 13731 / RS-1) (Desulfovibrio magneticus).